A 494-amino-acid polypeptide reads, in one-letter code: Poly(3-hydroxybutyrate) depolymerase (494 aa).

Positions 1-25 (MAFNFIRAAAAGAAMALCGVGSVHA) are cleaved as a signal peptide. Ser45 (nucleophile) is an active-site residue. Active-site charge relay system residues include Asp132 and His166. In terms of domain architecture, Fibronectin type-III spans 347–431 (APTGVSTSGA…AAASGTTLAA (85 aa)).

This sequence belongs to the AB hydrolase superfamily. Lipase family.

It is found in the secreted. The catalysed reaction is [(3R)-hydroxybutanoate](n) + H2O = [(3R)-hydroxybutanoate](n-2) + (3R)-hydroxybutanoate dimer + H(+). It carries out the reaction [(3R)-hydroxybutanoate](n) + H2O = [(3R)-hydroxybutanoate](n-1) + (R)-3-hydroxybutanoate + H(+). It catalyses the reaction (3R)-hydroxybutanoate dimer + H2O = 2 (R)-3-hydroxybutanoate + H(+). Its function is as follows. Catalyzes the hydrolysis of poly(3-hydroxybutyrate) (PHB) film, producing the monomer and dimer of 3-hydroxybutyrate (3HB), while the 3HB trimer and tetramer are not formed. The sequence is that of Poly(3-hydroxybutyrate) depolymerase from Delftia acidovorans (Pseudomonas acidovorans).